The chain runs to 893 residues: Alpha-actinin-1 (893 aa).

Residues 1–248 form an actin-binding region; it reads MDHHYDPQQT…IMTYVSSFYH (248 aa). Position 13 is a phosphotyrosine; by FAK1 (Y13). Calponin-homology (CH) domains follow at residues 32-136 and 145-251; these read KQQR…LRFA and TSAK…HAFS. 4 Spectrin repeats span residues 275-385, 395-500, 510-621, and 631-734; these read QLME…WLLN, HLAE…ALER, QLYL…ALME, and RLRK…EVEN. 2 EF-hand domains span residues 747–782 and 788–823; these read EQMNEFRASFNHFDRDHSGTLGPEEFKACLISLGYD and QGEAEFARIMSIVDPNRMGVVTFQAFIDFMSRETAD. Residues D760, D762, S764, T766, and E771 each contribute to the Ca(2+) site.

Belongs to the alpha-actinin family. Homodimer; antiparallel. Interacts with PDLIM4 (via PDZ domain).

Its subcellular location is the cytoplasm. It localises to the cytoskeleton. The protein localises to the myofibril. The protein resides in the sarcomere. It is found in the z line. Its subcellular location is the cell membrane. It localises to the cell junction. The protein localises to the cell projection. The protein resides in the ruffle. F-actin cross-linking protein is thought to anchor actin to a variety of intracellular structures. This is a bundling protein. The chain is Alpha-actinin-1 (ACTN1) from Gallus gallus (Chicken).